The following is a 163-amino-acid chain: 2-C-methyl-D-erythritol 2,4-cyclodiphosphate synthase (163 aa).

2 residues coordinate a divalent metal cation: aspartate 10 and histidine 12. 4-CDP-2-C-methyl-D-erythritol 2-phosphate contacts are provided by residues aspartate 10 to histidine 12 and histidine 36 to serine 37. Position 44 (histidine 44) interacts with a divalent metal cation. Residues aspartate 58–glycine 60, phenylalanine 63–aspartate 67, threonine 134–glutamate 137, phenylalanine 141, and arginine 144 each bind 4-CDP-2-C-methyl-D-erythritol 2-phosphate.

Belongs to the IspF family. Homotrimer. The cofactor is a divalent metal cation.

The catalysed reaction is 4-CDP-2-C-methyl-D-erythritol 2-phosphate = 2-C-methyl-D-erythritol 2,4-cyclic diphosphate + CMP. It participates in isoprenoid biosynthesis; isopentenyl diphosphate biosynthesis via DXP pathway; isopentenyl diphosphate from 1-deoxy-D-xylulose 5-phosphate: step 4/6. Functionally, involved in the biosynthesis of isopentenyl diphosphate (IPP) and dimethylallyl diphosphate (DMAPP), two major building blocks of isoprenoid compounds. Catalyzes the conversion of 4-diphosphocytidyl-2-C-methyl-D-erythritol 2-phosphate (CDP-ME2P) to 2-C-methyl-D-erythritol 2,4-cyclodiphosphate (ME-CPP) with a corresponding release of cytidine 5-monophosphate (CMP). The protein is 2-C-methyl-D-erythritol 2,4-cyclodiphosphate synthase of Carboxydothermus hydrogenoformans (strain ATCC BAA-161 / DSM 6008 / Z-2901).